Consider the following 432-residue polypeptide: Trigger factor (432 aa).

One can recognise a PPIase FKBP-type domain in the interval 161–246; the sequence is GTRATINFVG…VVKVESRELP (86 aa).

The protein belongs to the FKBP-type PPIase family. Tig subfamily.

It is found in the cytoplasm. The catalysed reaction is [protein]-peptidylproline (omega=180) = [protein]-peptidylproline (omega=0). Functionally, involved in protein export. Acts as a chaperone by maintaining the newly synthesized protein in an open conformation. Functions as a peptidyl-prolyl cis-trans isomerase. This is Trigger factor from Aliivibrio fischeri (strain ATCC 700601 / ES114) (Vibrio fischeri).